Reading from the N-terminus, the 629-residue chain is Aspartate--tRNA(Asp/Asn) ligase (629 aa).

The disordered stretch occupies residues 1–24 (MERSSRADLISEDSHPARTHTCGD). Basic and acidic residues predominate over residues 12-24 (EDSHPARTHTCGD). Glutamate 194 serves as a coordination point for L-aspartate. The tract at residues 218-221 (QTYK) is aspartate. Residue arginine 240 coordinates L-aspartate. ATP is bound by residues 240–242 (RDE) and glutamine 249. Histidine 474 lines the L-aspartate pocket. Glutamate 508 serves as a coordination point for ATP. Residue arginine 515 participates in L-aspartate binding. ATP is bound at residue 560–563 (GLDR).

The protein belongs to the class-II aminoacyl-tRNA synthetase family. Type 1 subfamily. In terms of assembly, homodimer.

It is found in the cytoplasm. It catalyses the reaction tRNA(Asx) + L-aspartate + ATP = L-aspartyl-tRNA(Asx) + AMP + diphosphate. In terms of biological role, aspartyl-tRNA synthetase with relaxed tRNA specificity since it is able to aspartylate not only its cognate tRNA(Asp) but also tRNA(Asn). Reaction proceeds in two steps: L-aspartate is first activated by ATP to form Asp-AMP and then transferred to the acceptor end of tRNA(Asp/Asn). This chain is Aspartate--tRNA(Asp/Asn) ligase, found in Salinibacter ruber (strain DSM 13855 / M31).